Reading from the N-terminus, the 425-residue chain is Cell adhesion molecule CEACAM16 (425 aa).

Positions 1–20 are cleaved as a signal peptide; the sequence is MALTGYSWLLLSATFLNVGA. A glycan (N-linked (GlcNAc...) asparagine) is linked at Asn36. 2 consecutive Ig-like C2-type domains span residues 133–218 and 223–309; these read PTVL…INLT and PERV…ASVV. A disulfide bond links Cys153 and Cys201. An N-linked (GlcNAc...) asparagine glycan is attached at Asn216. Cys252 and Cys293 are disulfide-bonded. N-linked (GlcNAc...) asparagine glycosylation occurs at Asn394.

Belongs to the immunoglobulin superfamily. CEA family. As to quaternary structure, homooligomer; can for homodimers and homotetramers. Interacts with TECTA and TECTB.

It localises to the secreted. Required for proper hearing, plays a role in maintaining the integrity of the tectorial membrane. The chain is Cell adhesion molecule CEACAM16 from Homo sapiens (Human).